Here is an 842-residue protein sequence, read N- to C-terminus: Oleate activated transcription factor 3 (842 aa).

Positions 22–50 form a DNA-binding region, zn(2)-C6 fungal-type; sequence CTNCKRRKSKCDRQNPCSNCVRFGNKDTC. The disordered stretch occupies residues 55 to 101; the sequence is NPKNTESQHGEDTDNKVKKQQPQMIKGKRNGTSSSIVGSKASSISPT. Residues 60–71 show a composition bias toward basic and acidic residues; that stretch reads ESQHGEDTDNKV. Positions 87 to 99 are enriched in low complexity; the sequence is SSSIVGSKASSIS.

It belongs to the OAF3 family.

It is found in the cytoplasm. The protein resides in the nucleus. Its subcellular location is the mitochondrion. Its function is as follows. Transcriptional inhibitor with a significantly increased number of target genes in response to oleate. The protein is Oleate activated transcription factor 3 (OAF3) of Zygosaccharomyces rouxii (strain ATCC 2623 / CBS 732 / NBRC 1130 / NCYC 568 / NRRL Y-229).